The following is a 244-amino-acid chain: tRNA pseudouridine synthase A (244 aa).

Asp52 functions as the Nucleophile in the catalytic mechanism. Tyr110 contacts substrate.

It belongs to the tRNA pseudouridine synthase TruA family. Homodimer.

The catalysed reaction is uridine(38/39/40) in tRNA = pseudouridine(38/39/40) in tRNA. Functionally, formation of pseudouridine at positions 38, 39 and 40 in the anticodon stem and loop of transfer RNAs. This Caldicellulosiruptor bescii (strain ATCC BAA-1888 / DSM 6725 / KCTC 15123 / Z-1320) (Anaerocellum thermophilum) protein is tRNA pseudouridine synthase A.